Here is a 940-residue protein sequence, read N- to C-terminus: Receptor-like protein 9b (940 aa).

An N-terminal signal peptide occupies residues 1–28; that stretch reads MLMMFSPAFVMVMDLMVLVMMIMMMVSS. The Extracellular portion of the chain corresponds to 29-895; that stretch reads LDAHGHISCI…GDEETTIDME (867 aa). Residues N53, N63, N66, N101, N115, and N151 are each glycosylated (N-linked (GlcNAc...) asparagine). LRR repeat units follow at residues 108-136, 137-163, 165-185, 186-211, 213-232, 233-255, 257-279, 281-304, 306-330, 331-354, 355-378, 379-402, 403-426, 427-450, 452-475, and 477-502; these read FGEL…SFER, LKNL…TASS, KTLI…ELIN, LRNL…NFHN, QGLD…LCQL, KNLR…CFDS, TQLQ…LIRN, DSVE…LIAN, SKLK…SLQP, KFQL…IQHQ, KDLH…LLEK, YPNL…RLLN, HTLQ…IGKV, LPNI…SFGE, KDIK…FLIG, and SSLH…NFGS. N-linked (GlcNAc...) asparagine glycosylation is found at N270 and N304. Residues N361, N389, and N402 are each glycosylated (N-linked (GlcNAc...) asparagine). 2 N-linked (GlcNAc...) asparagine glycosylation sites follow: N434 and N463. Residues 503–522 form an LRR 17; degenerate repeat; the sequence is LVVLIANNNLFTGIADGLRN. LRR repeat units lie at residues 523–546, 547–570, 571–593, 595–615, 616–639, 641–662, 663–686, 752–776, 777–799, 801–824, and 826–849; these read VQSL…WFGG, FFFA…LFSK, PTFK…HFTG, DMSL…STLI, KDVL…VKNE, ILSL…LCGL, RSIR…LNNV, FNFM…LGDL, QRIR…SFSN, TDIE…LSKL, and YMVV…KFST. N685 is a glycosylation site (N-linked (GlcNAc...) asparagine). N-linked (GlcNAc...) asparagine glycans are attached at residues N783 and N799. N-linked (GlcNAc...) asparagine glycans are attached at residues N831, N836, N867, and N873. Residues 896–916 traverse the membrane as a helical segment; that stretch reads IFYWSLAATYGVTWITFIVFL. The Cytoplasmic segment spans residues 917–940; sequence CFDSPWRRVWFHFVDAFISLFKCV.

It belongs to the RLP family.

The protein resides in the cell membrane. This Arabidopsis thaliana (Mouse-ear cress) protein is Receptor-like protein 9b.